The chain runs to 464 residues: NADH dehydrogenase [ubiquinone] flavoprotein 1, mitochondrial (464 aa).

The N-terminal 20 residues, 1-20 (MLATRRLLGWSLPARVSVRF), are a transit peptide targeting the mitochondrion. Lysine 81 carries the N6-acetyllysine; alternate modification. Lysine 81 is modified (N6-succinyllysine; alternate). An NADH-binding site is contributed by 87 to 96 (GRGGAGFPTG). The residue at position 104 (lysine 104) is an N6-acetyllysine. 199–247 (RGAGAYICGEETALIESIEGKQGKPRLKPPFPADVGVFGCPTTVANVET) provides a ligand contact to FMN. An Omega-N-methylarginine modification is found at arginine 257. Position 375 is an N6-acetyllysine (lysine 375). Residues cysteine 379, cysteine 382, cysteine 385, and cysteine 425 each coordinate [4Fe-4S] cluster.

This sequence belongs to the complex I 51 kDa subunit family. Core subunit of respiratory chain NADH dehydrogenase (Complex I) which is composed of 45 different subunits. This is a component of the flavoprotein-sulfur (FP) fragment of the enzyme. Interacts with RAB5IF. Requires FMN as cofactor. [4Fe-4S] cluster is required as a cofactor.

Its subcellular location is the mitochondrion inner membrane. It catalyses the reaction a ubiquinone + NADH + 5 H(+)(in) = a ubiquinol + NAD(+) + 4 H(+)(out). Core subunit of the mitochondrial membrane respiratory chain NADH dehydrogenase (Complex I) which catalyzes electron transfer from NADH through the respiratory chain, using ubiquinone as an electron acceptor. Part of the peripheral arm of the enzyme, where the electrons from NADH are accepted by flavin mononucleotide (FMN) and then passed along a chain of iron-sulfur clusters by electron tunnelling to the final acceptor ubiquinone. Contains FMN, which is the initial electron acceptor as well as one iron-sulfur cluster. This is NADH dehydrogenase [ubiquinone] flavoprotein 1, mitochondrial from Homo sapiens (Human).